The primary structure comprises 668 residues: Neurexin-3-beta (668 aa).

Residues 1-35 (MHLRTNPSICPGRRPAWTLWMCSLFWGCIVSSVWS) form the signal peptide. Over 36–593 (SSNVASSASS…EVVRESSSTT (558 aa)) the chain is Extracellular. Residues 84–284 (ATYIFGKSGG…NPNIKINGSV (201 aa)) form the Laminin G-like domain. The interval 510–529 (TASSSTGMVPKLPAGKMNNR) is disordered. Residues 594–614 (GMVVGIVAAAALCILILLYAM) form a helical membrane-spanning segment. Over 615–668 (YKYRNRDEGSYQVDETRNYISNSAQSNGTLMKEKQQSSKSGHKKQKNKDKEYYV) the chain is Cytoplasmic. The interval 636-668 (NSAQSNGTLMKEKQQSSKSGHKKQKNKDKEYYV) is disordered.

It belongs to the neurexin family. In terms of processing, processed by alpha-secretase leading to the formation of an extracellular soluble protein as well as a C-terminal membrane-embedded fragment (CTF). Proteolysis of these CTFs by gamma-secretase releases intracellular domains (ICDs) and extracellular peptides. As to expression, brain and arteries (at protein level).

Its subcellular location is the membrane. In terms of biological role, neuronal cell surface protein that may be involved in cell recognition and cell adhesion. Plays a role in angiogenesis. This is Neurexin-3-beta (NRXN3) from Gallus gallus (Chicken).